An 852-amino-acid polypeptide reads, in one-letter code: Mannosyl-oligosaccharide glucosidase GCS1 (852 aa).

Residues 1-31 (MTGASRRSARGRIKSSSLSPGSDEGSAYPPS) form a disordered region. Over 1-51 (MTGASRRSARGRIKSSSLSPGSDEGSAYPPSIRRGKGKELVSIGAFKTNLK) the chain is Cytoplasmic. Residues 6–12 (RRSARGR) carry the Endoplasmic reticulum targeting motif. The span at 15–26 (SSSLSPGSDEGS) shows a compositional bias: low complexity. Residues 52–72 (ILVGLIILGIIVIYFVINRLV) form a helical; Signal-anchor for type II membrane protein membrane-spanning segment. The Lumenal segment spans residues 73-852 (RHGLLFDESQ…LIMSEDYPIF (780 aa)). Positions 91-150 (PAPKVMDLSMFQGEHKESLYWGTYRPHVYFGVRARTPLSLVAGLMWLGVKDEMYVMRHFC) are required for endoplasmic reticulum targeting. Residues asparagine 282, asparagine 552, and asparagine 570 are each glycosylated (N-linked (GlcNAc...) asparagine). Residues 574-583 (QELNPKTLSS) are compositionally biased toward polar residues. The disordered stretch occupies residues 574 to 593 (QELNPKTLSSGLDDYPRASH). The active-site Proton donor is the aspartate 586. Residues asparagine 633, asparagine 662, and asparagine 730 are each glycosylated (N-linked (GlcNAc...) asparagine). Glutamate 819 (proton acceptor) is an active-site residue.

Belongs to the glycosyl hydrolase 63 family. As to expression, constitutively expressed in roots, stems, leaves, flowers and siliques.

It localises to the endoplasmic reticulum membrane. It catalyses the reaction N(4)-(alpha-D-Glc-(1-&gt;2)-alpha-D-Glc-(1-&gt;3)-alpha-D-Glc-(1-&gt;3)-alpha-D-Man-(1-&gt;2)-alpha-D-Man-(1-&gt;2)-alpha-D-Man-(1-&gt;3)-[alpha-D-Man-(1-&gt;2)-alpha-D-Man-(1-&gt;3)-[alpha-D-Man-(1-&gt;2)-alpha-D-Man-(1-&gt;6)]-alpha-D-Man-(1-&gt;6)]-beta-D-Man-(1-&gt;4)-beta-D-GlcNAc-(1-&gt;4)-beta-D-GlcNAc)-L-asparaginyl-[protein] + H2O = N(4)-(alpha-D-Glc-(1-&gt;3)-alpha-D-Glc-(1-&gt;3)-alpha-D-Man-(1-&gt;2)-alpha-D-Man-(1-&gt;2)-alpha-D-Man-(1-&gt;3)-[alpha-D-Man-(1-&gt;2)-alpha-D-Man-(1-&gt;3)-[alpha-D-Man-(1-&gt;2)-alpha-D-Man-(1-&gt;6)]-alpha-D-Man-(1-&gt;6)]-beta-D-Man-(1-&gt;4)-beta-D-GlcNAc-(1-&gt;4)-beta-D-GlcNAc)-L-asparaginyl-[protein] + beta-D-glucose. Its pathway is glycan metabolism; N-glycan degradation. Its function is as follows. Cleaves the distal alpha 1,2-linked glucose residue from the Glc(3)Man(9)GlcNAc(2) oligosaccharide precursor. Required for the accumulation of seed storage proteins, the formation of protein bodies, cell differentiation, cellulose biosynthesis and organization (in cell walls), cell shape determination and organization (e.g. epidermal cells), and embryo development. Involved in root development. The sequence is that of Mannosyl-oligosaccharide glucosidase GCS1 (GCS1) from Arabidopsis thaliana (Mouse-ear cress).